The primary structure comprises 38 residues: uncharacterized protein (38 aa).

Residues 10–32 traverse the membrane as a helical segment; it reads FSLLWYFLVGGGKGEVCWRFLGI.

It is found in the membrane. This is an uncharacterized protein from Saccharomyces cerevisiae (strain ATCC 204508 / S288c) (Baker's yeast).